The primary structure comprises 228 residues: CD9 antigen (228 aa).

Topologically, residues M1–Y12 are cytoplasmic. Residue C9 is the site of S-palmitoyl cysteine attachment. A helical membrane pass occupies residues L13 to L33. Residues W34–S55 lie on the Extracellular side of the membrane. N52 and N53 each carry an N-linked (GlcNAc...) asparagine glycan. Residues F56–L76 form a helical membrane-spanning segment. Residues G77 to C87 are Cytoplasmic-facing. S-palmitoyl cysteine attachment occurs at residues C78, C79, and C87. The helical transmembrane segment at M88–Y111 threads the bilayer. The Extracellular portion of the chain corresponds to S112–I195. Cystine bridges form between C152–C181 and C153–C167. Residues I196–I221 form a helical membrane-spanning segment. 2 S-palmitoyl cysteine lipidation sites follow: C218 and C219. Over R222–V228 the chain is Cytoplasmic.

Belongs to the tetraspanin (TM4SF) family. Forms both disulfide-linked homodimers and higher homooligomers as well as heterooligomers with other members of the tetraspanin family. Interacts (via the second extracellular domain) with integrin ITGAV:ITGB3. Interacts with integrin ITGA6:ITGB1; interaction takes place in oocytes and is involved in sperm-egg fusion. Part of integrin-tetraspanin complexes composed of CD81, beta-1 and beta-2 integrins in the membrane of monocyte/macrophages. Interacts with CD63; identified in a complex with CD63 and ITGB3. Associates with CR2/CD21 and with PTGFRN/CD9P1. Part of a complex composed of CD9, CD81, PTGFRN and IGSF8. Interacts directly with IGSF8. Interacts with PDPN; this interaction is homophilic and attenuates platelet aggregation and pulmonary metastasis induced by PDPN. Interacts (on T cell side) with CD81 at immunological synapses between antigen-presenting cells and T cells. In terms of processing, palmitoylated at a low, basal level in unstimulated platelets. The level of palmitoylation increases when platelets are activated by thrombin (in vitro). The protein exists in three forms with molecular masses between 22 and 27 kDa, and is known to carry covalently linked fatty acids. Palmitoylation by ZDHHC2 regulates CD9 expression, association with other tetraspanin family proteins and function in cell adhesion.

The protein localises to the cell membrane. The protein resides in the membrane. It is found in the secreted. Its subcellular location is the extracellular exosome. Functionally, integral membrane protein associated with integrins, which regulates different processes, such as sperm-egg fusion, platelet activation and aggregation, and cell adhesion. Present at the cell surface of oocytes and plays a key role in sperm-egg fusion, possibly by organizing multiprotein complexes and the morphology of the membrane required for the fusion. In myoblasts, associates with CD81 and PTGFRN and inhibits myotube fusion during muscle regeneration. In macrophages, associates with CD81 and beta-1 and beta-2 integrins, and prevents macrophage fusion into multinucleated giant cells specialized in ingesting complement-opsonized large particles. Also prevents the fusion between mononuclear cell progenitors into osteoclasts in charge of bone resorption. Acts as a receptor for PSG17. Involved in platelet activation and aggregation. Regulates paranodal junction formation. Involved in cell adhesion, cell motility and tumor metastasis. The protein is CD9 antigen of Chlorocebus aethiops (Green monkey).